A 1093-amino-acid chain; its full sequence is Fused isobutyryl-CoA mutase (1093 aa).

The segment at Met-1–Gly-20 is disordered. The 131-residue stretch at Lys-26–Arg-156 folds into the B12-binding domain. Position 39 (His-39) interacts with adenosylcob(III)alamin. Positions Leu-169–Ala-417 are GTPase chaperone MeaI. Gly-219–Ser-224 contacts GTP. Ser-223, Ile-248, Asp-249, and Asp-262 together coordinate Mg(2+). Arg-265 provides a ligand contact to GTP. 2 residues coordinate Mg(2+): Glu-310 and Thr-311. Position 357-360 (Asn-357–Asp-360) interacts with GTP. The segment at Arg-418 to Pro-579 is linker. Residues Phe-587, Arg-622, Arg-728, Tyr-772, Ser-821, Arg-856, and Lys-861 each contribute to the substrate site. Glu-973 and Asn-1092 together coordinate GTP.

This sequence belongs to the IcmF family. In terms of assembly, homodimer. The cofactor is adenosylcob(III)alamin. Requires Mg(2+) as cofactor.

The catalysed reaction is 2-methylpropanoyl-CoA = butanoyl-CoA. It carries out the reaction 3-methylbutanoyl-CoA = 2,2-dimethylpropanoyl-CoA. The enzyme catalyses GTP + H2O = GDP + phosphate + H(+). With respect to regulation, is prone to inactivation during catalytic turnover due to the occasional loss of the 5'-deoxyadenosine moiety and formation of the inactive cob(II)alamin cofactor in its active site. The GTPase activity of IcmF powers the ejection of the inactive cofactor and requires the presence of an acceptor protein, adenosyltransferase (ATR), for receiving it. ATR, in turn, catalyzes an adenosylation reaction converting cob(II)alamin in the presence of ATP and a reductant to the active AdoCbl cofactor. The repaired cofactor is then reloaded onto IcmF in a GTPase-gated step, regenerating active enzyme. The GTPase activity of IcmF is significantly decreased in the presence of excess of AdoCbl or cob(II)alamin and is higher in the apoenzyme state, indicating that the G-domain senses the presence and identity of the cofactor in the mutase active site. Its function is as follows. Catalyzes the reversible interconversion of isobutyryl-CoA and n-butyryl-CoA, and to a much lesser extent, of pivalyl-CoA and isovaleryl-CoA, using radical chemistry. Also exhibits GTPase activity, associated with its G-protein domain (MeaI) that functions as a chaperone that assists cofactor delivery and proper holo-enzyme assembly. The G-domain of IcmF also has a role in its cofactor repair. Does not display ATPase activity. In Cupriavidus metallidurans (strain ATCC 43123 / DSM 2839 / NBRC 102507 / CH34) (Ralstonia metallidurans), this protein is Fused isobutyryl-CoA mutase.